The chain runs to 1330 residues: MQNTTVHGLYFCHPTSIDGNPELLAVSRRSLSRGDHVTFTASQCRPKRLQCCQWHSCTISSTHIPTKDDLGKSFAYLRLLFSLDYTIADVLLIIGGLLFAICAGIPFPLLGIVFGDLINDLNTVTCSSSDRATADLSSAVRAKVLYVIYITIANFCFIYAHSTCWCLVSERLARRYRRRYFESIIKQEAKFIESLPSGDVVSRLVSDIELVQSGTSEKVGLVISTLSYFVAAYVVAFIKVPKIAGMLVSVVPCFFLMALGGGHYIKKFAGRLAEKVNAATSIASSSLSHLTLVHAFNANDRLEKRFAGYLLQSRKDAVRKATTHAAQLGCLYFIAYSANALAFWEGSQMISKSVADGNSGTSVGAVYTVIFVLIDASFILSQVAPFIHVFASAAGASERLLQVINRPSAIDGTSDSGDKTAAFGEEDIRFRDVHFKYPSRPDVPVLQGVTFNIPPKKHTAIVGPSGGGKSTVVALLERFYDPDSGDVLIGDKNFRDINVRYLRGNIGYVQQEPSLLDRTILENIAYGLVCVTEIVDLVKEAAANANALGFIEALPYGFATNVGTAGNQLSGGQKQRIALARALVREPCLLILDEATAALDSTSEQLIQAALNRVSERVTTVSIAHRLATAKNAHKIVVVQSGRVTEEGSHTDLVSRGGVYAEMVRLQNLGKLSLDDRVISGDMISALNATPETRQLLDEKQAFVDGNRSDITEDTVVADTPSDSRDGSEEEARKKRKRTRSAGFVTRYTFALIRPNLHWVLLGLAMSVIIGGSYSAEAIVFGHTVGSLSPCRSAEAISRDGNLYGLLFFILALVEFGANVVGGCAFGWAADKVLYRIRVLSLRSLLGQTVKWHESEDRTPGTLLTYITGDASALGGITGTTIGLLLATAVNLIGGLVISFSIAWKITIVLFPTIPVLLVSGMMKLRVQKQLAERHQKAFAKATAVTIEAVDNIRAVSAFSLEKQSYQVYGRALRGPYRATIKATFHGNAWLALAFSISNLVYALAYWWGSKQIAEGRYSQTQFFIVMPALLFSTQSCGQMFALAPDISKAGVASSNIVELLTTRSAEDEVTPGSSHSFQPSSSMGAQLRDVHFTYPHRPERPVLKGLNIDIKPGQFCALVGPSGSGKSTTFAMLERFYRPNAGAVVIDGVDVTRQVGTEFRDDIALVPQQNILFEGTVAFNVALGACPGHEPTQEEIEEACRMANIHDVIMTLPQGYQTMCSHDGKQFSGGQRQRLSIARALVRKPRLLLLDESTSALDVESEKRIQEALATLAGRTTVVAIAHRLNTIHRADQIFLIEDGRCIEQGTHQQLIQRSETYRTSVIHQSLET.

Residue Asn3 is glycosylated (N-linked (GlcNAc...) asparagine). 6 helical membrane passes run 90 to 110 (VLLIIGGLLFAICAGIPFPLL), 144 to 164 (VLYVIYITIANFCFIYAHSTC), 218 to 238 (KVGLVISTLSYFVAAYVVAFI), 243 to 263 (IAGMLVSVVPCFFLMALGGGH), 324 to 344 (HAAQLGCLYFIAYSANALAFW), and 370 to 390 (IFVLIDASFILSQVAPFIHVF). Positions 94-392 (IGGLLFAICA…VAPFIHVFAS (299 aa)) constitute an ABC transmembrane type-1 1 domain. In terms of domain architecture, ABC transporter 1 spans 428–666 (IRFRDVHFKY…GGVYAEMVRL (239 aa)). 463-470 (GPSGGGKS) is an ATP binding site. Asn707 carries an N-linked (GlcNAc...) asparagine glycan. The interval 717–736 (VADTPSDSRDGSEEEARKKR) is disordered. The segment covering 722-733 (SDSRDGSEEEAR) has biased composition (basic and acidic residues). 6 helical membrane passes run 761–781 (LLGLAMSVIIGGSYSAEAIVF), 806–826 (LLFFILALVEFGANVVGGCAF), 871–893 (ASALGGITGTTIGLLLATAVNLI), 903–923 (AWKITIVLFPTIPVLLVSGMM), 989–1009 (AWLALAFSISNLVYALAYWWG), and 1023–1043 (FFIVMPALLFSTQSCGQMFAL). One can recognise an ABC transmembrane type-1 2 domain in the interval 761–1049 (LLGLAMSVII…MFALAPDISK (289 aa)). An ABC transporter 2 domain is found at 1086–1325 (AQLRDVHFTY…SETYRTSVIH (240 aa)). 1121–1128 (GPSGSGKS) lines the ATP pocket.

Belongs to the ABC transporter superfamily. ABCB family. Multidrug resistance exporter (TC 3.A.1.201) subfamily.

The protein resides in the cell membrane. It carries out the reaction itraconazole(in) + ATP + H2O = itraconazole(out) + ADP + phosphate + H(+). The enzyme catalyses voriconazole(in) + ATP + H2O = voriconazole(out) + ADP + phosphate + H(+). Pleiotropic ABC efflux transporter that confers resistance to azoles such as itraconazole and voriconazole. This Aspergillus fumigatus (strain ATCC MYA-4609 / CBS 101355 / FGSC A1100 / Af293) (Neosartorya fumigata) protein is ABC multidrug transporter mdr4.